We begin with the raw amino-acid sequence, 1006 residues long: D-2-hydroxyglutarate dehydrogenase (1006 aa).

An FAD-binding PCMH-type domain is found at 47–279; the sequence is YQRLPQAAVF…VEAKLNVLPI (233 aa). (R)-2-hydroxyglutarate contacts are provided by R397 and H495. The 4Fe-4S ferredoxin-type domain occupies 655–687; sequence SHEVYDAMAGCLACKSCAGQCPIKVNVPDFRSR. Residues C665, C668, C671, and C675 each contribute to the [4Fe-4S] cluster site.

In the N-terminal section; belongs to the FAD-binding oxidoreductase/transferase type 4 family. [4Fe-4S] cluster serves as cofactor. Requires FAD as cofactor.

The enzyme catalyses (R)-2-hydroxyglutarate + A = 2-oxoglutarate + AH2. It functions in the pathway amino-acid degradation. In terms of biological role, catalyzes the oxidation of D-2-hydroxyglutarate (D-2-HGA) to 2-oxoglutarate. Is involved in a D-lysine catabolic pathway. This chain is D-2-hydroxyglutarate dehydrogenase, found in Pseudomonas putida (strain ATCC 47054 / DSM 6125 / CFBP 8728 / NCIMB 11950 / KT2440).